The sequence spans 1277 residues: NPC intracellular cholesterol transporter 1 (1277 aa).

Residues methionine 1–serine 22 form the signal peptide. At glutamine 23–tyrosine 269 the chain is on the lumenal side. 9 disulfides stabilise this stretch: cysteine 25–cysteine 74, cysteine 31–cysteine 42, cysteine 63–cysteine 109, cysteine 75–cysteine 113, cysteine 97–cysteine 238, cysteine 100–cysteine 160, cysteine 177–cysteine 184, cysteine 227–cysteine 243, and cysteine 240–cysteine 247. Residue asparagine 41 coordinates cholesterol. Asparagine 70 is a glycosylation site (N-linked (GlcNAc...) asparagine). Position 79 (glutamine 79) interacts with cholesterol. Residues asparagine 122 and asparagine 135 are each glycosylated (N-linked (GlcNAc...) asparagine). Positions leucine 175 to isoleucine 205 are important for cholesterol binding and cholesterol transfer from NPC1 to liposomes. N-linked (GlcNAc...) asparagine glycans are attached at residues asparagine 185 and asparagine 222. Residues valine 270–valine 290 traverse the membrane as a helical segment. Topologically, residues tryptophan 291–proline 350 are cytoplasmic. A helical transmembrane segment spans residues glycine 351–isoleucine 371. Residues arginine 372–leucine 621 lie on the Lumenal side of the membrane. 4 N-linked (GlcNAc...) asparagine glycosylation sites follow: asparagine 415, asparagine 452, asparagine 459, and asparagine 478. 2 cysteine pairs are disulfide-bonded: cysteine 468-cysteine 479 and cysteine 516-cysteine 533. In terms of domain architecture, SSD spans aspartate 620–leucine 785. The helical transmembrane segment at phenylalanine 622 to isoleucine 642 threads the bilayer. Residues lysine 643 to lysine 653 are Cytoplasmic-facing. The chain crosses the membrane as a helical span at residues isoleucine 654–isoleucine 674. The Lumenal segment spans residues phenylalanine 675–tyrosine 677. Residues isoleucine 678 to glycine 698 form a helical membrane-spanning segment. At valine 699–serine 734 the chain is on the cytoplasmic side. Residues methionine 735–proline 755 form a helical membrane-spanning segment. The Lumenal segment spans residues alanine 756 to threonine 759. The chain crosses the membrane as a helical span at residues phenylalanine 760 to valine 780. The Cytoplasmic segment spans residues serine 781 to aspartate 832. Residues tryptophan 833–leucine 853 form a helical membrane-spanning segment. Topologically, residues asparagine 854–threonine 1097 are lumenal. An N-linked (GlcNAc...) asparagine glycan is attached at asparagine 898. Residues cysteine 909 and cysteine 914 are joined by a disulfide bond. Asparagine 916, asparagine 931, asparagine 961, asparagine 968, asparagine 1028, and asparagine 1063 each carry an N-linked (GlcNAc...) asparagine glycan. 3 disulfide bridges follow: cysteine 956-cysteine 1011, cysteine 957-cysteine 979, and cysteine 967-cysteine 976. Residues isoleucine 1098–cysteine 1118 form a helical membrane-spanning segment. Over glutamate 1119–threonine 1123 the chain is Cytoplasmic. A helical transmembrane segment spans residues valine 1124–tryptophan 1144. Glycine 1145 is a topological domain (lumenal). Residues isoleucine 1146 to phenylalanine 1166 traverse the membrane as a helical segment. The Cytoplasmic segment spans residues cysteine 1167–glycine 1194. Residues serine 1195–alanine 1215 form a helical membrane-spanning segment. Residues lysine 1216–arginine 1226 lie on the Lumenal side of the membrane. Residues methionine 1227–leucine 1247 form a helical membrane-spanning segment. The Cytoplasmic segment spans residues serine 1248–phenylalanine 1277. The interval leucine 1274 to phenylalanine 1277 is required for location in lysosomes. Residues leucine 1274 to phenylalanine 1277 carry the Di-leucine motif motif.

Belongs to the patched family. Interacts (via the second lumenal domain) with NPC2. Interacts with TMEM97; the interaction may decrease NPC1 availability to the cell. Interacts with TIM1. Interacts with SLC38A9; this interaction inhibits cholesterol-mediated mTORC1 activation via its sterol transport activity. Post-translationally, N-glycosylated. Detected in corpus luteum, granulosa cells and adrenal gland.

It is found in the late endosome membrane. The protein localises to the lysosome membrane. It carries out the reaction cholesterol(in) = cholesterol(out). Functionally, intracellular cholesterol transporter which acts in concert with NPC2 and plays an important role in the egress of cholesterol from the endosomal/lysosomal compartment. Unesterified cholesterol that has been released from LDLs in the lumen of the late endosomes/lysosomes is transferred by NPC2 to the cholesterol-binding pocket in the N-terminal domain of NPC1. Cholesterol binds to NPC1 with the hydroxyl group buried in the binding pocket. Binds oxysterol with higher affinity than cholesterol. May play a role in vesicular trafficking in glia, a process that may be crucial for maintaining the structural and functional integrity of nerve terminals. Inhibits cholesterol-mediated mTORC1 activation throught its interaction with SLC38A9. The protein is NPC intracellular cholesterol transporter 1 of Sus scrofa (Pig).